A 349-amino-acid chain; its full sequence is UDP-3-O-acylglucosamine N-acyltransferase (349 aa).

Histidine 248 (proton acceptor) is an active-site residue.

It belongs to the transferase hexapeptide repeat family. LpxD subfamily. In terms of assembly, homotrimer.

The catalysed reaction is a UDP-3-O-[(3R)-3-hydroxyacyl]-alpha-D-glucosamine + a (3R)-hydroxyacyl-[ACP] = a UDP-2-N,3-O-bis[(3R)-3-hydroxyacyl]-alpha-D-glucosamine + holo-[ACP] + H(+). It participates in bacterial outer membrane biogenesis; LPS lipid A biosynthesis. Catalyzes the N-acylation of UDP-3-O-acylglucosamine using 3-hydroxyacyl-ACP as the acyl donor. Is involved in the biosynthesis of lipid A, a phosphorylated glycolipid that anchors the lipopolysaccharide to the outer membrane of the cell. This is UDP-3-O-acylglucosamine N-acyltransferase from Colwellia psychrerythraea (strain 34H / ATCC BAA-681) (Vibrio psychroerythus).